A 795-amino-acid chain; its full sequence is MKFSESWLREWVNPAVTTDELTHQITMAGLEVDDVLPVAGTFNGVKVGHVVECGQHPDADKLRVTKVDVGEEELLDIVCGAANCRQGLKVAVATVGAVLPGDFKIKKAKLRGQPSHGMLCSFTELGIDVESDGIMELAIDAPIGMDFRDFLALNDVTVDVDLTSNRADCFSIRGMAREVGVLNRADVTEPSVAPVAPSIDDTVAIEVKAPAACPRYLGRVVKNVNVQAKTPLWMQEKLRRCGIRSIDPVVDITNFVLLEQGQPMHAFDLAKIDGGIVVRLAEQGEKITLLDGSEAELNADTLVVADHNKALAIAGIFGGEESGVTSETKDVLLECAFFAPDHIRGRARSYGLHTDSSMRFERGVDYALQVSAMERATALLVEICGGEVAPVVAVESEAELPKPNKVALRRTKLDNLLGHHIADSDVVEILERLGMTVETTAEGWVAVAPTWRFDIAIEQDLVEEVGRIYGYDNIPNQNPAAALKMHDHQEANIPLKRVRDLLVDRGYHEAITYSFVEPEQQKLVVPGVDALILPNPISAEMSAMRLGLIQGLLNTVVHNQKRQQPRVRLFEYGLRFIPCDTAENGMRQEPMLAGVIAGTRSEEHWNIDTNTVDFFDLKGDVEAILELSANDKAYSFVAAKHPALHPGQSAAIVVDGKEIGVIGTVHPELERKFGLNGRTIVFEIEWSAINRKVIPEAVALSKFPANRRDIAVVVDEAVASGDIVNACLEVGGEFLKAAKLFDVYVGKGVEEGKKSLAIALTLQSNERTLEDADIAGAVDAIVTHVSEKFGASLRD.

Positions Ala39–Arg148 constitute a tRNA-binding domain. The 76-residue stretch at Pro401–Asn476 folds into the B5 domain. Mg(2+) contacts are provided by Asp454, Asp460, Glu463, and Glu464. In terms of domain architecture, FDX-ACB spans Ser701–Arg794.

This sequence belongs to the phenylalanyl-tRNA synthetase beta subunit family. Type 1 subfamily. In terms of assembly, tetramer of two alpha and two beta subunits. It depends on Mg(2+) as a cofactor.

Its subcellular location is the cytoplasm. It carries out the reaction tRNA(Phe) + L-phenylalanine + ATP = L-phenylalanyl-tRNA(Phe) + AMP + diphosphate + H(+). In Vibrio vulnificus (strain CMCP6), this protein is Phenylalanine--tRNA ligase beta subunit.